The chain runs to 668 residues: UvrABC system protein B (668 aa).

The Helicase ATP-binding domain occupies 31-416; it reads QGITDGVPAQ…RGHIIEQIIR (386 aa). 44–51 serves as a coordination point for ATP; the sequence is GTTGSGKT. The Beta-hairpin signature appears at 97 to 120; it reads YYDYYQPEAYIARSDTYIEKSLLI. Residues 433-596 enclose the Helicase C-terminal domain; the sequence is QIDDLLEEIR…ITPQPIIKPI (164 aa). The UVR domain maps to 621 to 656; it reads EASIKTYEEAMYQAAQEFQFDEAVKYRDLMNAAKKQ.

It belongs to the UvrB family. Forms a heterotetramer with UvrA during the search for lesions. Interacts with UvrC in an incision complex.

The protein resides in the cytoplasm. Its function is as follows. The UvrABC repair system catalyzes the recognition and processing of DNA lesions. A damage recognition complex composed of 2 UvrA and 2 UvrB subunits scans DNA for abnormalities. Upon binding of the UvrA(2)B(2) complex to a putative damaged site, the DNA wraps around one UvrB monomer. DNA wrap is dependent on ATP binding by UvrB and probably causes local melting of the DNA helix, facilitating insertion of UvrB beta-hairpin between the DNA strands. Then UvrB probes one DNA strand for the presence of a lesion. If a lesion is found the UvrA subunits dissociate and the UvrB-DNA preincision complex is formed. This complex is subsequently bound by UvrC and the second UvrB is released. If no lesion is found, the DNA wraps around the other UvrB subunit that will check the other stand for damage. The protein is UvrABC system protein B of Chlamydia trachomatis serovar A (strain ATCC VR-571B / DSM 19440 / HAR-13).